Consider the following 762-residue polypeptide: Catalase-peroxidase (762 aa).

Residues 1–22 form a disordered region; that stretch reads MAEAKCPFSQSRSNANVAGGGT. Residues 96–242 constitute a cross-link (tryptophyl-tyrosyl-methioninium (Trp-Tyr) (with M-268)); it reads WHSAGTYRVF…LAASHMGLIY (147 aa). His-97 serves as the catalytic Proton acceptor. The tryptophyl-tyrosyl-methioninium (Tyr-Met) (with W-96) cross-link spans 242–268; the sequence is YVNPEGPDGNPDPVAAARDIRTTFGRM. His-283 provides a ligand contact to heme b.

It belongs to the peroxidase family. Peroxidase/catalase subfamily. As to quaternary structure, homodimer or homotetramer. It depends on heme b as a cofactor. Post-translationally, formation of the three residue Trp-Tyr-Met cross-link is important for the catalase, but not the peroxidase activity of the enzyme.

Its subcellular location is the cytoplasm. It carries out the reaction H2O2 + AH2 = A + 2 H2O. The enzyme catalyses 2 H2O2 = O2 + 2 H2O. Its function is as follows. Bifunctional enzyme with both catalase and broad-spectrum peroxidase activity. This chain is Catalase-peroxidase, found in Aspergillus niger (strain ATCC MYA-4892 / CBS 513.88 / FGSC A1513).